Here is a 483-residue protein sequence, read N- to C-terminus: NADPH:adrenodoxin oxidoreductase, mitochondrial (483 aa).

The transit peptide at Met1–Phe14 directs the protein to the mitochondrion. Ala32, Asp53, Leu61, and Leu97 together coordinate FAD. NADP(+)-binding positions include Gln169–Val172, Arg213–Arg214, and Glu225. FAD is bound by residues Trp391 and Gly398–Ile400. Gly398 is an NADP(+) binding site.

It belongs to the ferredoxin--NADP reductase type 1 family. It depends on FAD as a cofactor.

It localises to the mitochondrion. The catalysed reaction is 2 reduced [adrenodoxin] + NADP(+) + H(+) = 2 oxidized [adrenodoxin] + NADPH. Its function is as follows. Associates in vitro with the adrenodoxin-like protein MFDX1 to form an efficient low potential electron transfer chain that is able to reduce cytochrome C. Functions as accessory mitochondrial protein involved with BIO2 in the plant biotin synthase reaction. This chain is NADPH:adrenodoxin oxidoreductase, mitochondrial, found in Arabidopsis thaliana (Mouse-ear cress).